We begin with the raw amino-acid sequence, 236 residues long: MLSTLIRRLSRALLWFVAGSIVLVLVFRWVPPPGTALMVERKVQSWVNGEPIDLQRDWEPWENISDELKVAVIAGEDQKFANHWGFDLPAIQAALAHNERGGNIRGASTLTQQVAKNLFLWSGRSWFRKGLEAWFTALIELFWSKERILEVYLNSAEWGKGVFGAQAAARYHFGVDASRLSRQQAAQLAAVLPSPIKWSASRPSAYVASRAGWIRRQMSQLGGPSYLMQLDSSRKL.

A helical membrane pass occupies residues 12-31; sequence ALLWFVAGSIVLVLVFRWVP.

This sequence belongs to the glycosyltransferase 51 family.

Its subcellular location is the cell inner membrane. The enzyme catalyses [GlcNAc-(1-&gt;4)-Mur2Ac(oyl-L-Ala-gamma-D-Glu-L-Lys-D-Ala-D-Ala)](n)-di-trans,octa-cis-undecaprenyl diphosphate + beta-D-GlcNAc-(1-&gt;4)-Mur2Ac(oyl-L-Ala-gamma-D-Glu-L-Lys-D-Ala-D-Ala)-di-trans,octa-cis-undecaprenyl diphosphate = [GlcNAc-(1-&gt;4)-Mur2Ac(oyl-L-Ala-gamma-D-Glu-L-Lys-D-Ala-D-Ala)](n+1)-di-trans,octa-cis-undecaprenyl diphosphate + di-trans,octa-cis-undecaprenyl diphosphate + H(+). It participates in cell wall biogenesis; peptidoglycan biosynthesis. In terms of biological role, peptidoglycan polymerase that catalyzes glycan chain elongation from lipid-linked precursors. This is Biosynthetic peptidoglycan transglycosylase from Pseudomonas putida (strain ATCC 700007 / DSM 6899 / JCM 31910 / BCRC 17059 / LMG 24140 / F1).